The chain runs to 111 residues: Large ribosomal subunit protein eL30 (111 aa).

Belongs to the eukaryotic ribosomal protein eL30 family.

This chain is Large ribosomal subunit protein eL30 (RPL30), found in Oryza sativa subsp. japonica (Rice).